A 541-amino-acid polypeptide reads, in one-letter code: uncharacterized protein (541 aa).

Helical transmembrane passes span 57-77 (LVVTANLLGIGVALLLVTIAI), 90-110 (LTFGVVPGYVLLALALGSYAL), 144-164 (VGHLMFWGVGTALLTTLYGLI), 167-187 (AFIPRFLFAVSFCGVLVATAT), 221-241 (MVVWLLGSGVPVVGIALMAMF), and 257-277 (VLIISMVTLVFGFILMWILAW). The region spanning 278 to 329 (LTATPVRVVRAALRRVERGELRTNLVVFDGTELGELQRGFNAMVAGLRERER) is the HAMP domain. The 125-residue stretch at 361–485 (AVVFIDIVGS…EPVNEAARLC (125 aa)) folds into the Guanylate cyclase domain.

It belongs to the adenylyl cyclase class-3 family.

The protein localises to the cell membrane. This is an uncharacterized protein from Mycobacterium tuberculosis (strain CDC 1551 / Oshkosh).